A 91-amino-acid polypeptide reads, in one-letter code: Small ribosomal subunit protein uS17 (91 aa).

This sequence belongs to the universal ribosomal protein uS17 family. As to quaternary structure, part of the 30S ribosomal subunit.

Functionally, one of the primary rRNA binding proteins, it binds specifically to the 5'-end of 16S ribosomal RNA. This chain is Small ribosomal subunit protein uS17, found in Salinispora arenicola (strain CNS-205).